We begin with the raw amino-acid sequence, 300 residues long: Bifunctional protein FolD 1 (300 aa).

NADP(+) contacts are provided by residues 166 to 168 (GRS), Ser-191, and Ile-232.

Belongs to the tetrahydrofolate dehydrogenase/cyclohydrolase family. Homodimer.

It catalyses the reaction (6R)-5,10-methylene-5,6,7,8-tetrahydrofolate + NADP(+) = (6R)-5,10-methenyltetrahydrofolate + NADPH. It carries out the reaction (6R)-5,10-methenyltetrahydrofolate + H2O = (6R)-10-formyltetrahydrofolate + H(+). The protein operates within one-carbon metabolism; tetrahydrofolate interconversion. Its function is as follows. Catalyzes the oxidation of 5,10-methylenetetrahydrofolate to 5,10-methenyltetrahydrofolate and then the hydrolysis of 5,10-methenyltetrahydrofolate to 10-formyltetrahydrofolate. The polypeptide is Bifunctional protein FolD 1 (Roseobacter denitrificans (strain ATCC 33942 / OCh 114) (Erythrobacter sp. (strain OCh 114))).